The sequence spans 583 residues: Sensor protein SrrB (583 aa).

Topologically, residues 1–11 are cytoplasmic; the sequence is MMSRLNSVVIK. The chain crosses the membrane as a helical span at residues 12–32; it reads LWLTIILIVTTVLILLSIALI. The Extracellular segment spans residues 33–174; sequence TFMQYYFTQE…SIEDTNNAIT (142 aa). Residues 175 to 195 form a helical membrane-spanning segment; that stretch reads IITIITAVIFLTITTVFAFFL. Over 196-583 the chain is Cytoplasmic; the sequence is SSRITKPLRR…TFIIKLPKPE (388 aa). The 53-residue stretch at 197-249 folds into the HAMP domain; that stretch reads SRITKPLRRLRDQATRVSEGDYSYKPSVTTKDEIGQLSQAFNQMSTEIEEHVD. Residues 366–583 enclose the Histidine kinase domain; sequence NVSHELRTPI…TFIIKLPKPE (218 aa). Phosphohistidine; by autocatalysis is present on His-369.

It localises to the cell membrane. The catalysed reaction is ATP + protein L-histidine = ADP + protein N-phospho-L-histidine.. In terms of biological role, member of the two-component regulatory system SrrA/SrrB, which is involved in the global regulation of staphylococcal virulence factors in response to environmental oxygen levels as well as biofilm formation. Also plays an essential role in host-derived nitric oxide resistance by regulating hmp/flavohemoglobin, an enzyme that detoxifies nitric oxide by converting it to nitrate. Functions as a sensor protein kinase which is autophosphorylated at a histidine residue and transfers its phosphate group to SrrA. In turn, SrrA binds to the upstream promoter regions of the target genes to positively and negatively regulate their expression. The chain is Sensor protein SrrB (srrB) from Staphylococcus aureus (strain MRSA252).